The sequence spans 456 residues: Sensitive to high expression protein 9, mitochondrial (456 aa).

Residues 1-30 (MLRYYGATRNLPLVFSINKLMLRASSFTRP) constitute a mitochondrion transit peptide. At 31 to 296 (FHYSSYSLQN…WSDKIRRTST (266 aa)) the chain is on the mitochondrial matrix side. Coiled coils occupy residues 71-128 (QHLK…KDEL) and 178-277 (IQKL…YRAI). Residues 297-317 (WGTFILMGMNIFLFIVLQLLL) traverse the membrane as a helical segment. Topologically, residues 318 to 435 (EPWKRKRLVG…KLDAPLVFDT (118 aa)) are mitochondrial intermembrane. A helical membrane pass occupies residues 436-456 (LEFYLYSISLVSMTILVSGLI).

Belongs to the SHE9 family. In terms of assembly, homooligomer. Participates in a complex of about 300 kDa.

It localises to the mitochondrion inner membrane. Required for the maintenance of the structure of the mitochondrial inner membrane. Involved in mitochondrial morphology. Causes growth arrest when highly overexpressed. In Saccharomyces cerevisiae (strain ATCC 204508 / S288c) (Baker's yeast), this protein is Sensitive to high expression protein 9, mitochondrial (SHE9).